Consider the following 1656-residue polypeptide: Probable phospholipid-transporting ATPase DNF3 (1656 aa).

At 1–164 the chain is on the lumenal side; sequence MGIADGQRRR…PRQLYAQFSK (164 aa). A disordered region spans residues 36–74; it reads ELEDINESKTFSGSDNNDKDDRDETSGNYAAEEDYEMEE. Residues 51–60 are compositionally biased toward basic and acidic residues; the sequence is NNDKDDRDET. A helical transmembrane segment spans residues 165–185; sequence LANTYFFIVAVLQMIPGWSTT. Residues 186 to 451 lie on the Cytoplasmic side of the membrane; sequence GTYTTIIPLC…RTKAPKLQRK (266 aa). The chain crosses the membrane as a helical span at residues 452–472; the sequence is INMIIVFMVFVVATISLFSYL. The Lumenal segment spans residues 473 to 495; sequence GHVLHKKKYIDQNKAWYLFQADA. The helical transmembrane segment at 496–516 threads the bilayer; sequence GVAPTIMSFIIMYNTVIPLSL. The Cytoplasmic portion of the chain corresponds to 517–1157; the sequence is YVTMEIIKVV…ISKMNAVSQE (641 aa). The active-site 4-aspartylphosphate intermediate is the Asp566. The ATP site is built by Asp566, Lys567, and Thr568. Position 566 (Asp566) interacts with Mg(2+). Thr568 is a Mg(2+) binding site. A Phosphoserine modification is found at Ser627. ATP contacts are provided by residues Glu765, Phe813, Ser815, Lys818, Lys838, Arg1034, Thr1035, Thr1114, Gly1115, Asp1116, 1167–1174, Arg1202, and Lys1208; that span reads VVVIDGAT. The helical transmembrane segment at 1158-1178 threads the bilayer; the sequence is VDSGNIAHCVVVIDGATMAMF. At 1179–1318 the chain is on the lumenal side; sequence EGNPTYMSVF…MFSGSSLYEP (140 aa). Residue Asp1229 participates in Mg(2+) binding. The ATP site is built by Asn1232 and Asp1233. The helical transmembrane segment at 1319–1339 threads the bilayer; the sequence is WSLSMFNTLFTSLPVLCIGMF. Residues 1340–1365 lie on the Cytoplasmic side of the membrane; it reads EKDLKPMTLLTVPELYSYGRLSQGFN. A helical membrane pass occupies residues 1366 to 1386; that stretch reads WLIFMEWVILATTNSLIITFL. The Lumenal portion of the chain corresponds to 1387–1395; that stretch reads NVVMWGMSS. A helical membrane pass occupies residues 1396-1416; it reads LSDNTMYPLGLINFTAIVALI. Residues 1417-1432 are Cytoplasmic-facing; it reads NVKSQFVEMHNRNWLA. The chain crosses the membrane as a helical span at residues 1433-1453; sequence FTSVVLSCGGWLVWCCALPIL. The Lumenal segment spans residues 1454-1473; sequence NNTDQIYDVAYGFYNHFGKD. A helical membrane pass occupies residues 1474-1494; the sequence is ITFWCTSLVLALLPITLDIVY. Residues 1495-1656 lie on the Cytoplasmic side of the membrane; the sequence is KTFKVMIWPS…IIQARLKDLE (162 aa). Residues 1554–1576 form a disordered region; that stretch reads PRTNSRASAKTHNSSIYSMSNGN.

This sequence belongs to the cation transport ATPase (P-type) (TC 3.A.3) family. Type IV subfamily. As to quaternary structure, component of a flippase complex consisting of DNF3 and YNR048W/CRF1. Interacts with YNR048W/CRF1; the interaction is direct and required for proper expression and endoplasmic reticulum (ER) export of either partner. It depends on Mg(2+) as a cofactor.

It is found in the golgi apparatus. Its subcellular location is the trans-Golgi network membrane. The protein resides in the endosome membrane. It carries out the reaction ATP + H2O + phospholipidSide 1 = ADP + phosphate + phospholipidSide 2.. The enzyme catalyses a 1,2-diacyl-sn-glycero-3-phosphocholine(out) + ATP + H2O = a 1,2-diacyl-sn-glycero-3-phosphocholine(in) + ADP + phosphate + H(+). The catalysed reaction is a 1,2-diacyl-sn-glycero-3-phosphoethanolamine(out) + ATP + H2O = a 1,2-diacyl-sn-glycero-3-phosphoethanolamine(in) + ADP + phosphate + H(+). Functionally, catalytic component of a P4-ATPase flippase complex which catalyzes the hydrolysis of ATP coupled to the transport of phosphatidylcholine and small amounts of phosphatidylethanolamine from the lumen to the cytosolic leaflet of the trans-Golgi network and ensures the maintenance of asymmetric distribution of phospholipids. May be involved in transport from early endosomes to the trans-Golgi network (TGN). The protein is Probable phospholipid-transporting ATPase DNF3 (DNF3) of Saccharomyces cerevisiae (strain ATCC 204508 / S288c) (Baker's yeast).